Consider the following 306-residue polypeptide: Ornithine carbamoyltransferase (306 aa).

Residues serine 53–threonine 56, glutamine 80, arginine 104, and histidine 131–glutamine 134 each bind carbamoyl phosphate. L-ornithine-binding positions include asparagine 162, aspartate 219, and serine 223–methionine 224. Residues cysteine 259–leucine 260 and arginine 287 each bind carbamoyl phosphate.

The protein belongs to the aspartate/ornithine carbamoyltransferase superfamily. OTCase family.

The protein resides in the cytoplasm. The catalysed reaction is carbamoyl phosphate + L-ornithine = L-citrulline + phosphate + H(+). Its pathway is amino-acid biosynthesis; L-arginine biosynthesis; L-arginine from L-ornithine and carbamoyl phosphate: step 1/3. Functionally, reversibly catalyzes the transfer of the carbamoyl group from carbamoyl phosphate (CP) to the N(epsilon) atom of ornithine (ORN) to produce L-citrulline. The protein is Ornithine carbamoyltransferase of Acinetobacter baumannii (strain ATCC 17978 / DSM 105126 / CIP 53.77 / LMG 1025 / NCDC KC755 / 5377).